Here is a 67-residue protein sequence, read N- to C-terminus: Large ribosomal subunit protein bL35 (67 aa).

Positions 1–16 (MPKMKTKSSAKKRFRV) are enriched in basic residues. Residues 1-23 (MPKMKTKSSAKKRFRVRPGGTVK) are disordered.

It belongs to the bacterial ribosomal protein bL35 family.

In Variovorax paradoxus (strain S110), this protein is Large ribosomal subunit protein bL35.